A 209-amino-acid chain; its full sequence is Putative 3-methyladenine DNA glycosylase (209 aa).

A disordered region spans residues 189–209 (YISKTQPGPPPKKRKKGLESS). Over residues 199-209 (PKKRKKGLESS) the composition is skewed to basic residues.

The protein belongs to the DNA glycosylase MPG family.

This chain is Putative 3-methyladenine DNA glycosylase, found in Chlorobaculum tepidum (strain ATCC 49652 / DSM 12025 / NBRC 103806 / TLS) (Chlorobium tepidum).